The following is a 158-amino-acid chain: MDIMHGDLRRNGSNQSVPSRHGWIDMEALSPLADQSMPGEWSVGLCDCFGDLHTCCLTLWCPCVTFGRTAEIVDRGSTCCMSGTLYYLLSTIGWQWLYGCAKRSSMRSQYSLRESPCMDCCVHFWCGPCALCQEYTELQKRGFHMAKGISSPPHLPTV.

A run of 2 helical transmembrane segments spans residues 49-67 and 78-94; these read FGDLHTCCLTLWCPCVTFG and TCCMSGTLYYLLSTIGW.

It belongs to the cornifelin family.

It is found in the membrane. The sequence is that of Cell number regulator 11 (CNR11) from Zea mays (Maize).